A 179-amino-acid polypeptide reads, in one-letter code: Phospholipase A2 (179 aa).

An N-terminal signal peptide occupies residues 1 to 21; the sequence is MHALRSSVLALWLCLHVSVRA. A propeptide spanning residues 22-39 is cleaved from the precursor; the sequence is WMTYRSANGLDEYEPEDR. 3 residues coordinate Ca(2+): Trp-47, Gly-49, and Gly-51. 5 cysteine pairs are disulfide-bonded: Cys-48–Cys-70, Cys-69–Cys-109, Cys-76–Cys-102, Cys-100–Cys-133, and Cys-142–Cys-150. His-73 is an active-site residue. Asp-74 contributes to the Ca(2+) binding site. Residue Asp-103 is part of the active site. N-linked (GlcNAc...) asparagine glycosylation occurs at Asn-112.

Requires Ca(2+) as cofactor. Expressed by the venom gland.

The protein resides in the secreted. The enzyme catalyses a 1,2-diacyl-sn-glycero-3-phosphocholine + H2O = a 1-acyl-sn-glycero-3-phosphocholine + a fatty acid + H(+). In terms of biological role, PLA2 catalyzes the calcium-dependent hydrolysis of the 2-acyl groups in 3-sn-phosphoglycerides. This is Phospholipase A2 from Xylocopa appendiculata circumvolans (Japanese carpenter bee).